A 310-amino-acid chain; its full sequence is Protein-L-isoaspartate O-methyltransferase (310 aa).

Residues 1–41 (MSGERAKRFPLALEDLKRAPRKSEGRPGERQTAGAVPKAAD) form a disordered region. The span at 14-29 (EDLKRAPRKSEGRPGE) shows a compositional bias: basic and acidic residues. Residue Ser-157 is part of the active site.

The protein belongs to the methyltransferase superfamily. L-isoaspartyl/D-aspartyl protein methyltransferase family.

It is found in the cytoplasm. The enzyme catalyses [protein]-L-isoaspartate + S-adenosyl-L-methionine = [protein]-L-isoaspartate alpha-methyl ester + S-adenosyl-L-homocysteine. Catalyzes the methyl esterification of L-isoaspartyl residues in peptides and proteins that result from spontaneous decomposition of normal L-aspartyl and L-asparaginyl residues. It plays a role in the repair and/or degradation of damaged proteins. This chain is Protein-L-isoaspartate O-methyltransferase, found in Burkholderia cenocepacia (strain HI2424).